Here is a 185-residue protein sequence, read N- to C-terminus: HTH-type transcriptional regulator SACOL2593 (185 aa).

The region spanning 6–66 (KENRQRIEEI…YVIQRDLDIF (61 aa)) is the HTH tetR-type domain. Residues 29–48 (SMNRIAKELGIGMGTLYRHF) constitute a DNA-binding region (H-T-H motif).

This is HTH-type transcriptional regulator SACOL2593 from Staphylococcus aureus (strain COL).